The chain runs to 245 residues: Probable phosphatase Spro_1934 (245 aa).

Residues His7, His9, His15, His40, Glu73, His101, His131, Asp192, and His194 each contribute to the Zn(2+) site.

The protein belongs to the PHP family. Homotrimer. Requires Zn(2+) as cofactor.

This is Probable phosphatase Spro_1934 from Serratia proteamaculans (strain 568).